A 49-amino-acid chain; its full sequence is Large ribosomal subunit protein bL33 (49 aa).

It belongs to the bacterial ribosomal protein bL33 family.

This Caldanaerobacter subterraneus subsp. tengcongensis (strain DSM 15242 / JCM 11007 / NBRC 100824 / MB4) (Thermoanaerobacter tengcongensis) protein is Large ribosomal subunit protein bL33.